The sequence spans 342 residues: Signaling lymphocytic activation molecule (342 aa).

Positions 1-26 (MDSRGFLSLRCLLVLALASKLSCGTG) are cleaved as a signal peptide. The Extracellular portion of the chain corresponds to 27-237 (ESLMNCPEVP…CRPESSVPRQ (211 aa)). An Ig-like V-type domain is found at 29–138 (LMNCPEVPGK…QHFCLQLKLY (110 aa)). 7 N-linked (GlcNAc...) asparagine glycosylation sites follow: Asn-57, Asn-102, Asn-125, Asn-150, Asn-157, Asn-189, and Asn-217. The 80-residue stretch at 144–223 (PEIKVLNWTQ…PVSNRSWSFN (80 aa)) folds into the Ig-like C2-type domain. Disulfide bonds link Cys-158-Cys-228 and Cys-164-Cys-209. The chain crosses the membrane as a helical span at residues 238–261 (WRLYAGLFLGGIVGVILIFEVVLL). Residues 262–342 (LLRRRGKTNH…VYASVTFPES (81 aa)) are Cytoplasmic-facing. The short motif at 282-287 (TIYAQV) is the ITSM 1 element. 3 positions are modified to phosphotyrosine; by FYN: Tyr-284, Tyr-310, and Tyr-334. An SH2-binding motif is present at residues 310-315 (YVAATE). The ITSM 2 motif lies at 332 to 337 (TVYASV).

Interacts (via cytoplasmic domain) with SH2D1A and SH2D1B; SH2D1A mediates association with FYN. Interacts (via cytoplasmic domain phosphorylated on tyrosine residues) with INPP5D and PTPN11; presence of SH2D1A facilitates binding to INPP5D. Interacts with MAP4K1. Interacts with PIK3C3, BECN1 and UVRAG; indicative for an association with PI3K complex II (PI3KC3-C2). Interacts with canine distemper virus HN protein; suggesting that it may serve as a receptor. Phosphorylated on tyrosine residues by FYN.

It is found in the cell membrane. Its function is as follows. Self-ligand receptor of the signaling lymphocytic activation molecule (SLAM) family. SLAM receptors triggered by homo- or heterotypic cell-cell interactions are modulating the activation and differentiation of a wide variety of immune cells and thus are involved in the regulation and interconnection of both innate and adaptive immune response. Activities are controlled by presence or absence of small cytoplasmic adapter proteins, SH2D1A/SAP and/or SH2D1B/EAT-2. SLAMF1-induced signal-transduction events in T-lymphocytes are different from those in B-cells. Two modes of SLAMF1 signaling seem to exist: one depending on SH2D1A (and perhaps SH2D1B) and another in which protein-tyrosine phosphatase 2C (PTPN11)-dependent signal transduction operates. Initially it has been proposed that association with SH2D1A prevents binding to inhibitory effectors including INPP5D/SHIP1 and PTPN11/SHP-2. However, signaling is also regulated by SH2D1A which can simultaneously interact with and recruit FYN which subsequently phosphorylates and activates SLAMF1. Mediates IL-2-independent proliferation of activated T cells during immune responses and induces IFN-gamma production. Downstreaming signaling involves INPP5D/SHIP1, DOK1 and DOK2 leading to inhibited IFN-gamma production in T-cells, and PRKCQ, BCL10 and NFKB1 leading to increased T-cell activation and Th2 cytokine production. Promotes T-cell receptor-induced IL-4 secretion by CD4(+) cells. Inhibits antigen receptor-mediated production of IFN-gamma, but not IL-2, in CD4(-)/CD8(-) T-cells. Required for IL-4 production by germinal centers T follicular helper (T(Fh))cells. May inhibit CD40-induced signal transduction in monocyte-derived dendritic cells. May play a role in allergic responses and may regulate allergen-induced Th2 cytokine and Th1 cytokine secretion. In conjunction with SLAMF6 controls the transition between positive selection and the subsequent expansion and differentiation of the thymocytic natural killer T (NKT) cell lineage. Involved in the peripheral differentiation of indifferent natural killer T (iNKT) cells toward a regulatory NKT2 type. In macrophages involved in down-regulation of IL-12, TNF-alpha and nitric oxide in response to lipopolysaccharide (LPS). In B-cells activates the ERK signaling pathway independently of SH2D1A but implicating both, SYK and INPP5D, and activates Akt signaling dependent on SYK and SH2D1A. In conjunction with SLAMF5 and SLAMF6 may be a negative regulator of the humoral immune response. In Canis lupus familiaris (Dog), this protein is Signaling lymphocytic activation molecule (SLAMF1).